We begin with the raw amino-acid sequence, 348 residues long: Holliday junction branch migration complex subunit RuvB (348 aa).

Residues 1-183 (MTDPSRLVTP…FGIPVRLNFY (183 aa)) form a large ATPase domain (RuvB-L) region. Residues leucine 22, arginine 23, glycine 64, lysine 67, threonine 68, threonine 69, 130-132 (EDF), arginine 173, tyrosine 183, and arginine 220 contribute to the ATP site. Threonine 68 lines the Mg(2+) pocket. The tract at residues 184–254 (TIEELESIVS…IADHALGALE (71 aa)) is small ATPAse domain (RuvB-S). The head domain (RuvB-H) stretch occupies residues 257–348 (AAGLDAMDRR…FGLFGGEEEA (92 aa)). Arginine 293, arginine 312, and arginine 317 together coordinate DNA.

Belongs to the RuvB family. As to quaternary structure, homohexamer. Forms an RuvA(8)-RuvB(12)-Holliday junction (HJ) complex. HJ DNA is sandwiched between 2 RuvA tetramers; dsDNA enters through RuvA and exits via RuvB. An RuvB hexamer assembles on each DNA strand where it exits the tetramer. Each RuvB hexamer is contacted by two RuvA subunits (via domain III) on 2 adjacent RuvB subunits; this complex drives branch migration. In the full resolvosome a probable DNA-RuvA(4)-RuvB(12)-RuvC(2) complex forms which resolves the HJ.

Its subcellular location is the cytoplasm. It catalyses the reaction ATP + H2O = ADP + phosphate + H(+). In terms of biological role, the RuvA-RuvB-RuvC complex processes Holliday junction (HJ) DNA during genetic recombination and DNA repair, while the RuvA-RuvB complex plays an important role in the rescue of blocked DNA replication forks via replication fork reversal (RFR). RuvA specifically binds to HJ cruciform DNA, conferring on it an open structure. The RuvB hexamer acts as an ATP-dependent pump, pulling dsDNA into and through the RuvAB complex. RuvB forms 2 homohexamers on either side of HJ DNA bound by 1 or 2 RuvA tetramers; 4 subunits per hexamer contact DNA at a time. Coordinated motions by a converter formed by DNA-disengaged RuvB subunits stimulates ATP hydrolysis and nucleotide exchange. Immobilization of the converter enables RuvB to convert the ATP-contained energy into a lever motion, pulling 2 nucleotides of DNA out of the RuvA tetramer per ATP hydrolyzed, thus driving DNA branch migration. The RuvB motors rotate together with the DNA substrate, which together with the progressing nucleotide cycle form the mechanistic basis for DNA recombination by continuous HJ branch migration. Branch migration allows RuvC to scan DNA until it finds its consensus sequence, where it cleaves and resolves cruciform DNA. The sequence is that of Holliday junction branch migration complex subunit RuvB from Rhodopseudomonas palustris (strain HaA2).